Reading from the N-terminus, the 118-residue chain is Large ribosomal subunit protein mL53 (118 aa).

The tract at residues 99-118 is disordered; the sequence is AAAASAPGADKVAPGTSTRR.

The protein belongs to the mitochondrion-specific ribosomal protein mL53 family. In terms of assembly, component of the mitochondrial ribosome large subunit (39S) which comprises a 16S rRNA and about 50 distinct proteins.

The protein localises to the mitochondrion. The polypeptide is Large ribosomal subunit protein mL53 (Mrpl53) (Mus musculus (Mouse)).